Reading from the N-terminus, the 52-residue chain is Large ribosomal subunit protein bL32c (52 aa).

It belongs to the bacterial ribosomal protein bL32 family.

It localises to the plastid. It is found in the chloroplast. In Capsella bursa-pastoris (Shepherd's purse), this protein is Large ribosomal subunit protein bL32c.